Reading from the N-terminus, the 187-residue chain is Elongation factor P (187 aa).

This sequence belongs to the elongation factor P family.

It is found in the cytoplasm. The protein operates within protein biosynthesis; polypeptide chain elongation. In terms of biological role, involved in peptide bond synthesis. Stimulates efficient translation and peptide-bond synthesis on native or reconstituted 70S ribosomes in vitro. Probably functions indirectly by altering the affinity of the ribosome for aminoacyl-tRNA, thus increasing their reactivity as acceptors for peptidyl transferase. The protein is Elongation factor P of Kocuria rhizophila (strain ATCC 9341 / DSM 348 / NBRC 103217 / DC2201).